Consider the following 215-residue polypeptide: High mobility group protein B1 (215 aa).

Position 1–10 (1–10) interacts with heparin; that stretch reads MGKGDPKKPR. The tract at residues 1-97 is sufficient for interaction with HAVCR2; sequence MGKGDPKKPR…KFKDPNAPKR (97 aa). Residues Lys3, Lys7, Lys8, and Lys12 each carry the N6-acetyllysine modification. Residues 3–15 are LPS binding (delipidated); that stretch reads KGDPKKPRGKMSS. Positions 9-79 form a DNA-binding region, HMG box 1; the sequence is PRGKMSSYAF…RYEREMKTYI (71 aa). Cys23 bears the Cysteine sulfonic acid (-SO3H); alternate mark. An intrachain disulfide couples Cys23 to Cys45. Residues 27–43 form an NLS 1 region; that stretch reads HKKKHPDASVNFSEFSK. A Nuclear localization signal (NLS) 1 motif is present at residues 27 to 43; sequence HKKKHPDASVNFSEFSK. An N6-acetyllysine mark is found at Lys28, Lys29, and Lys30. Residue Lys28 forms an Isoglutamyl lysine isopeptide (Lys-Gln) (interchain with Q-?) linkage. Ser35 carries the post-translational modification Phosphoserine. Lys43 carries the N6-acetyllysine modification. Isoglutamyl lysine isopeptide (Lys-Gln) (interchain with Q-?) cross-links involve residues Lys43 and Lys44. Cys45 carries the post-translational modification Cysteine sulfonic acid (-SO3H); alternate. Residue Lys68 forms an Isoglutamyl lysine isopeptide (Lys-Gln) (interchain with Q-?) linkage. The tract at residues 76 to 95 is disordered; it reads KTYIPPKGETKKKFKDPNAP. The interval 80–96 is LPS binding (Lipid A); the sequence is PPKGETKKKFKDPNAPK. The span at 83-94 shows a compositional bias: basic and acidic residues; it reads GETKKKFKDPNA. Residues 89–108 are cytokine-stimulating activity; that stretch reads FKDPNAPKRPPSAFFLFCSE. Residue Lys90 is modified to N6-acetyllysine. The segment at residues 95–163 is a DNA-binding region (HMG box 2); sequence PKRPPSAFFL…KYEKDIAAYR (69 aa). Ser100 carries the post-translational modification Phosphoserine. Cys106 is subject to Cysteine sulfonic acid (-SO3H). N6-acetyllysine occurs at positions 127, 128, 141, 172, 173, 177, and 180. Positions 150–183 are binding to AGER/RAGE; that stretch reads KLKEKYEKDIAAYRAKGKPDAAKKGVVKAEKSKK. Basic and acidic residues predominate over residues 161 to 179; sequence AYRAKGKPDAAKKGVVKAE. The segment at 161–215 is disordered; the sequence is AYRAKGKPDAAKKGVVKAEKSKKKKEEEDDEEDEEDEEEEEEEEDEDEEEDDDDE. The interval 178 to 184 is NLS 2; sequence AEKSKKK. Positions 178–184 match the Nuclear localization signal (NLS) 2 motif; it reads AEKSKKK. Lys180 is covalently cross-linked (Isoglutamyl lysine isopeptide (Lys-Gln) (interchain with Q-?)). At Ser181 the chain carries ADP-ribosylserine. 4 positions are modified to N6-acetyllysine: Lys182, Lys183, Lys184, and Lys185. Residues Lys182, Lys183, and Lys184 each participate in an isoglutamyl lysine isopeptide (Lys-Gln) (interchain with Q-?) cross-link. A compositionally biased stretch (acidic residues) spans 187-215; that stretch reads EEDDEEDEEDEEEEEEEEDEDEEEDDDDE.

It belongs to the HMGB family. In terms of assembly, interacts (fully reduced HMGB1) with CXCL12; probably in a 1:2 ratio involving two molecules of CXCL12, each interacting with one HMG box of HMGB1; inhibited by glycyrrhizin. Associates with the TLR4:LY96 receptor complex. Component of the RAG complex composed of core components RAG1 and RAG2, and associated component HMGB1 or HMGB2. Interacts (in cytoplasm upon starvation) with BECN1; inhibits the interaction of BECN1 and BCL2 leading to promotion of autophagy. Interacts with KPNA1; involved in nuclear import. Interacts with SREBF1, TLR2, TLR4, TLR9, APEX1, FEN1, POLB, TERT. Interacts with AGER, PTPRZ1, IL1B, MSH2, XPA, XPC, HNF1A, TP53. Interacts with CD24; the probable CD24:SIGLEC10 complex is proposed to inhibit HGMB1-mediated tissue damage immune response. Interacts with THBD; prevents HGMB1 interaction with ACER/RAGE and inhibits HGMB1 pro-inflammatory activity. Interacts with HAVCR2; impairs HMGB1 binding to B-DNA and likely HMGB1-mediated innate immune response. Interacts with XPO1; mediating nuclear export. Interacts with receptor RAGE/AGER. Post-translationally, acetylated on multiple sites upon stimulation with LPS. Acetylation on lysine residues in the nuclear localization signals (NLS 1 and NLS 2) leads to cytoplasmic localization and subsequent secretion. Acetylation on Lys-3 results in preferential binding to DNA ends and impairs DNA bending activity. Phosphorylated at serine residues. Phosphorylation in both NLS regions is required for cytoplasmic translocation followed by secretion. In terms of processing, reduction/oxidation of cysteine residues Cys-23, Cys-45 and Cys-106 and a possible intramolecular disulfide bond involving Cys-23 and Cys-45 give rise to different redox forms with specific functional activities in various cellular compartments: 1- Fully reduced HGMB1 (HMGB1C23hC45hC106h), 2- Disulfide HMGB1 (HMGB1C23-C45C106h) and 3- Sulfonyl HMGB1 (HMGB1C23soC45soC106so). Post-translationally, poly-ADP-ribosylated by PARP1 when secreted following stimulation with LPS. In vitro cleavage by CASP1 is liberating a HMG box 1-containing peptide which may mediate immunogenic activity; the peptide antagonizes apoptosis-induced immune tolerance. Can be proteolytically cleaved by a thrombin:thrombomodulin complex; reduces binding to heparin and pro-inflammatory activities. In terms of processing, forms covalent cross-links mediated by transglutaminase TGM2, between a glutamine and the epsilon-amino group of a lysine residue, forming homopolymers and heteropolymers. In terms of tissue distribution, serum levels are found elevated in mice with modeled systemic lupus erythematosus (SLE) and are correlated with SLE disease activity.

Its subcellular location is the nucleus. It is found in the cytoplasm. The protein localises to the chromosome. It localises to the cell membrane. The protein resides in the endosome. Its subcellular location is the endoplasmic reticulum-Golgi intermediate compartment. It is found in the secreted. Functionally, multifunctional redox sensitive protein with various roles in different cellular compartments. In the nucleus is one of the major chromatin-associated non-histone proteins and acts as a DNA chaperone involved in replication, transcription, chromatin remodeling, V(D)J recombination, DNA repair and genome stability. Proposed to be an universal biosensor for nucleic acids. Promotes host inflammatory response to sterile and infectious signals and is involved in the coordination and integration of innate and adaptive immune responses. In the cytoplasm functions as a sensor and/or chaperone for immunogenic nucleic acids implicating the activation of TLR9-mediated immune responses, and mediates autophagy. Acts as a danger associated molecular pattern (DAMP) molecule that amplifies immune responses during tissue injury. Released to the extracellular environment can bind DNA, nucleosomes, IL-1 beta, CXCL12, AGER isoform 2/sRAGE, lipopolysaccharide (LPS) and lipoteichoic acid (LTA), and activates cells through engagement of multiple surface receptors. In the extracellular compartment fully reduced HMGB1 (released by necrosis) acts as a chemokine, disulfide HMGB1 (actively secreted) as a cytokine, and sulfonyl HMGB1 (released from apoptotic cells) promotes immunological tolerance. Has proangiogenic activity. May be involved in platelet activation. Binds to phosphatidylserine and phosphatidylethanolamide. Bound to RAGE mediates signaling for neuronal outgrowth. May play a role in accumulation of expanded polyglutamine (polyQ) proteins. In terms of biological role, nuclear functions are attributed to fully reduced HGMB1. Associates with chromatin and binds DNA with a preference to non-canonical DNA structures such as single-stranded DNA, DNA-containing cruciforms or bent structures, supercoiled DNA and ZDNA. Can bent DNA and enhance DNA flexibility by looping thus providing a mechanism to promote activities on various gene promoters by enhancing transcription factor binding and/or bringing distant regulatory sequences into close proximity. May be involved in nucleotide excision repair (NER), mismatch repair (MMR) and base excision repair (BER) pathways, and double strand break repair such as non-homologous end joining (NHEJ). Involved in V(D)J recombination by acting as a cofactor of the RAG complex: acts by stimulating cleavage and RAG protein binding at the 23 bp spacer of conserved recombination signal sequences (RSS). In vitro can displace histone H1 from highly bent DNA. Can restructure the canonical nucleosome leading to relaxation of structural constraints for transcription factor-binding. Enhances binding of sterol regulatory element-binding proteins (SREBPs) such as SREBF1 to their cognate DNA sequences and increases their transcriptional activities. Facilitates binding of TP53 to DNA. Proposed to be involved in mitochondrial quality control and autophagy in a transcription-dependent fashion implicating HSPB1; however, this function has been questioned. Can modulate the activity of the telomerase complex and may be involved in telomere maintenance. In the cytoplasm proposed to dissociate the BECN1:BCL2 complex via competitive interaction with BECN1 leading to autophagy activation. Can protect BECN1 and ATG5 from calpain-mediated cleavage and thus proposed to control their proautophagic and proapoptotic functions and to regulate the extent and severity of inflammation-associated cellular injury. In myeloid cells has a protective role against endotoxemia and bacterial infection by promoting autophagy. Involved in endosomal translocation and activation of TLR9 in response to CpG-DNA in macrophages. Its function is as follows. In the extracellular compartment (following either active secretion or passive release) involved in regulation of the inflammatory response. Fully reduced HGMB1 (which subsequently gets oxidized after release) in association with CXCL12 mediates the recruitment of inflammatory cells during the initial phase of tissue injury; the CXCL12:HMGB1 complex triggers CXCR4 homodimerization. Induces the migration of monocyte-derived immature dendritic cells and seems to regulate adhesive and migratory functions of neutrophils implicating AGER/RAGE and ITGAM. Can bind to various types of DNA and RNA including microbial unmethylated CpG-DNA to enhance the innate immune response to nucleic acids. Proposed to act in promiscuous DNA/RNA sensing which cooperates with subsequent discriminative sensing by specific pattern recognition receptors. Promotes extracellular DNA-induced AIM2 inflammasome activation implicating AGER/RAGE. Disulfide HMGB1 binds to transmembrane receptors, such as AGER/RAGE, TLR2, TLR4 and probably TREM1, thus activating their signal transduction pathways. Mediates the release of cytokines/chemokines such as TNF, IL-1, IL-6, IL-8, CCL2, CCL3, CCL4 and CXCL10. Promotes secretion of interferon-gamma by macrophage-stimulated natural killer (NK) cells in concert with other cytokines like IL-2 or IL-12. TLR4 is proposed to be the primary receptor promoting macrophage activation and signaling through TLR4 seems to implicate LY96/MD-2. In bacterial LPS- or LTA-mediated inflammatory responses binds to the endotoxins and transfers them to CD14 for signaling to the respective TLR4:LY96 and TLR2 complexes. Contributes to tumor proliferation by association with ACER/RAGE. Can bind to IL1-beta and signals through the IL1R1:IL1RAP receptor complex. Binding to class A CpG activates cytokine production in plasmacytoid dendritic cells implicating TLR9, MYD88 and AGER/RAGE and can activate autoreactive B cells. Via HMGB1-containing chromatin immune complexes may also promote B cell responses to endogenous TLR9 ligands through a B-cell receptor (BCR)-dependent and ACER/RAGE-independent mechanism. Inhibits phagocytosis of apoptotic cells by macrophages; the function is dependent on poly-ADP-ribosylation and involves binding to phosphatidylserine on the cell surface of apoptotic cells. In adaptive immunity may be involved in enhancing immunity through activation of effector T-cells and suppression of regulatory T (TReg) cells. In contrast, without implicating effector or regulatory T-cells, required for tumor infiltration and activation of T-cells expressing the lymphotoxin LTA:LTB heterotrimer thus promoting tumor malignant progression. Also reported to limit proliferation of T-cells. Released HMGB1:nucleosome complexes formed during apoptosis can signal through TLR2 to induce cytokine production. Involved in induction of immunological tolerance by apoptotic cells; its pro-inflammatory activities when released by apoptotic cells are neutralized by reactive oxygen species (ROS)-dependent oxidation specifically on Cys-106. During macrophage activation by activated lymphocyte-derived self apoptotic DNA (ALD-DNA) promotes recruitment of ALD-DNA to endosomes. The sequence is that of High mobility group protein B1 (Hmgb1) from Mus musculus (Mouse).